The following is a 231-amino-acid chain: tRNA (guanine-N(1)-)-methyltransferase (231 aa).

Residues Gly-112 and 132–137 (IGDYIL) contribute to the S-adenosyl-L-methionine site.

It belongs to the RNA methyltransferase TrmD family. In terms of assembly, homodimer.

It localises to the cytoplasm. The catalysed reaction is guanosine(37) in tRNA + S-adenosyl-L-methionine = N(1)-methylguanosine(37) in tRNA + S-adenosyl-L-homocysteine + H(+). Functionally, specifically methylates guanosine-37 in various tRNAs. The chain is tRNA (guanine-N(1)-)-methyltransferase from Sulfurimonas denitrificans (strain ATCC 33889 / DSM 1251) (Thiomicrospira denitrificans (strain ATCC 33889 / DSM 1251)).